A 200-amino-acid polypeptide reads, in one-letter code: MRRGRLLIAGLAALVLSACATLPEPVDDPKARYQEAVERLRAQTDWDASGRAALRTADDAGSLSLEWRQRGETYQVDLRAPLGAGSARLEGGPEGVWLTTSAGDREYAPDPETLVAWFTGYQVPVSALRYWLRGLDAPGPEVERLDLDPAGRPERLHQAGWEVVYRDWSQTNGLPLPRRLDISRGEDSVRVVIRDWSLAP.

A signal peptide spans methionine 1–alanine 18. Cysteine 19 carries N-palmitoyl cysteine lipidation. The S-diacylglycerol cysteine moiety is linked to residue cysteine 19.

This sequence belongs to the LolB family. As to quaternary structure, monomer.

Its subcellular location is the cell outer membrane. Functionally, plays a critical role in the incorporation of lipoproteins in the outer membrane after they are released by the LolA protein. This chain is Outer-membrane lipoprotein LolB, found in Alkalilimnicola ehrlichii (strain ATCC BAA-1101 / DSM 17681 / MLHE-1).